The chain runs to 330 residues: Polyprenyl transferase ausN (330 aa).

A run of 5 helical transmembrane segments spans residues 116 to 136 (AATI…LFLP), 165 to 185 (LILI…GMEP), 189 to 209 (ILSM…IDLV), 238 to 258 (AYSL…LGGL), and 260 to 280 (VPFV…FLRA).

The protein belongs to the UbiA prenyltransferase family. Requires Mg(2+) as cofactor.

It is found in the membrane. The enzyme catalyses 3,5-dimethylorsellinate + (2E,6E)-farnesyl diphosphate = (3R)-3-farnesyl-6-hydroxy-2,3,5-trimethyl-4-oxocyclohexa-1,5-diene-1-carboxylate + diphosphate + H(+). Its pathway is secondary metabolite biosynthesis; terpenoid biosynthesis. In terms of biological role, polyprenyl transferase; part of the gene cluster B that mediates the biosynthesis of austinol and dehydroaustinol, two fungal meroterpenoids. The first step of the pathway is the synthesis of 3,5-dimethylorsellinic acid by the polyketide synthase ausA. 3,5-dimethylorsellinic acid is then prenylated by the polyprenyl transferase ausN. Further epoxidation by the FAD-dependent monooxygenase ausM and cyclization by the probable terpene cyclase ausL lead to the formation of protoaustinoid A. Protoaustinoid A is then oxidized to spiro-lactone preaustinoid A3 by the combined action of the FAD-binding monooxygenases ausB and ausC, and the dioxygenase ausE. Acid-catalyzed keto-rearrangement and ring contraction of the tetraketide portion of preaustinoid A3 by ausJ lead to the formation of preaustinoid A4. The aldo-keto reductase ausK, with the help of ausH, is involved in the next step by transforming preaustinoid A4 into isoaustinone which is in turn hydroxylated by the P450 monooxygenase ausI to form austinolide. Finally, the cytochrome P450 monooxygenase ausG modifies austinolide to austinol. Austinol can be further modified to dehydroaustinol which forms a diffusible complex with diorcinol that initiates conidiation. Due to genetic rearrangements of the clusters and the subsequent loss of some enzymes, the end products of the Emericella nidulans austinoid biosynthesis clusters are austinol and dehydroaustinol, even if additional enzymes, such as the O-acetyltransferase ausQ and the cytochrome P450 monooxygenase ausR are still functional. In Emericella nidulans (strain FGSC A4 / ATCC 38163 / CBS 112.46 / NRRL 194 / M139) (Aspergillus nidulans), this protein is Polyprenyl transferase ausN.